The sequence spans 792 residues: Kinesin-related protein 2 (792 aa).

2 disordered regions span residues 22-50 (TINSRPSLLRKPASSSSQSNDRISYPPST) and 162-183 (NNININSNNSSNSNNNILSPVQ). Over residues 34–50 (ASSSSQSNDRISYPPST) the composition is skewed to polar residues. Residues 284-423 (RLSLSIQDIK…LEKSRSDEKV (140 aa)) adopt a coiled-coil conformation. The 345-residue stretch at 437 to 781 (NIRVFCRIRP…LRFAAKVNSC (345 aa)) folds into the Kinesin motor domain. Residue 528–535 (GQTGSGKT) participates in ATP binding.

Belongs to the TRAFAC class myosin-kinesin ATPase superfamily. Kinesin family. NCD subfamily.

Its subcellular location is the nucleus. It localises to the cytoplasm. It is found in the cytoskeleton. The protein resides in the spindle. Its function is as follows. Microtubule-dependent motor that is probably involved in microtubule organization in the mitotic spindle. The polypeptide is Kinesin-related protein 2 (kif2) (Dictyostelium discoideum (Social amoeba)).